Here is a 2083-residue protein sequence, read N- to C-terminus: Centriole proteome protein 16 (2083 aa).

A disordered region spans residues 205 to 333; the sequence is DAPTMDFMPP…PAVPPPLSPS (129 aa). The segment covering 227 to 245 has biased composition (low complexity); that stretch reads TAETADTAGAAGRKSLSGA. The span at 246-258 shows a compositional bias: gly residues; sequence SAGGAGPAKGGAK. Composition is skewed to low complexity over residues 259-274 and 283-292; these read AGAA…SAGA and GSTAGAATPG. Positions 302–315 are enriched in acidic residues; the sequence is GEEDFEDDLSEDLD. A compositionally biased stretch (pro residues) spans 319–331; the sequence is PLPPSPAVPPPLS. 10 WD repeats span residues 482–523, 526–569, 579–620, 689–726, 728–767, 770–809, 812–853, 856–895, 990–1029, and 1041–1079; these read GHTA…CLAI, AHAS…AAGG, ATEY…GTSV, LHAA…YLLE, EHEG…YTTL, SHCG…QLYE, APGE…LLQE, QHRA…APAQ, VSPL…ALRG, and GHPS…MQQE. Disordered regions lie at residues 1113–1141 and 1225–1276; these read HTQA…VASA and ALVV…PPPP. Residues 1263-1276 show a composition bias toward pro residues; it reads VPLPPSPQPLPPPP. WD repeat units lie at residues 1326-1365, 1403-1444, 1448-1486, 1497-1539, 1651-1691, 1736-1781, and 1785-1824; these read GHNR…RAAQ, YHPL…LVAA, EQSP…LEQR, RDPR…QPPQ, GQAA…AEPA, DPLD…QLSW, and RHPA…LVSY. A disordered region spans residues 1713–1743; the sequence is APAHTLRHPPSAAPSSAASSSPLDPLDPLPA. Residues 1720–1743 are compositionally biased toward low complexity; that stretch reads HPPSAAPSSAASSSPLDPLDPLPA. A disordered region spans residues 1832 to 1870; it reads GPTPHSPGGTGRRSPRGAASPPPAPPRPGTGPLQAMAVS. The span at 1851-1860 shows a compositional bias: pro residues; sequence SPPPAPPRPG. A WD 18 repeat occupies 2035 to 2073; it reads GHAGAVAAASYTGDGGHAVTASGSVLMVWDAAQLLKGVT.

This sequence belongs to the WD repeat WDR90/POC16 family.

It localises to the cytoplasm. The protein localises to the cytoskeleton. The protein resides in the microtubule organizing center. It is found in the centrosome. Its subcellular location is the centriole. In terms of biological role, required for flagellum assembly and/or maintenance. The polypeptide is Centriole proteome protein 16 (Chlamydomonas reinhardtii (Chlamydomonas smithii)).